The chain runs to 474 residues: 1-aminocyclopropane-1-carboxylate synthase 4 (474 aa).

Residues Glu47 and Tyr85 each contribute to the substrate site. Lys273 carries the N6-(pyridoxal phosphate)lysine modification.

Belongs to the class-I pyridoxal-phosphate-dependent aminotransferase family. In terms of assembly, homodimer and heterodimer. In vivo, the relevance of heterodimerization with other ACS enzymes is however unsure. Interacts with XBAT32. Interacts (via its C-terminal region) with ETO1 and EOL1. Pyridoxal 5'-phosphate is required as a cofactor. Post-translationally, ubiquitinated by XBAT32. Ubiquitination probably leads to its subsequent degradation, thus controlling ethylene production. As to expression, expressed in roots, leaves and flowers.

The enzyme catalyses S-adenosyl-L-methionine = 1-aminocyclopropane-1-carboxylate + S-methyl-5'-thioadenosine + H(+). It participates in alkene biosynthesis; ethylene biosynthesis via S-adenosyl-L-methionine; ethylene from S-adenosyl-L-methionine: step 1/2. Functionally, 1-aminocyclopropane-1-carboxylate synthase (ACS) enzymes catalyze the conversion of S-adenosyl-L-methionine (SAM) into 1-aminocyclopropane-1-carboxylate (ACC), a direct precursor of ethylene. The chain is 1-aminocyclopropane-1-carboxylate synthase 4 (ACS4) from Arabidopsis thaliana (Mouse-ear cress).